The chain runs to 263 residues: MPEGPEIRRAADNLEAAIKGKPLTDVWFAFPQLKSYQSRLIGQHVTHVETRGKALLTHFSNDLTLYSHNQLYGVWRVVDTGEEPQTTRVLRVKLQTADKTILLYSASDIEMLTPEQLTTHPFLQRVGPDVLDPNLTPEVVKERLLSPRFRNRQFAGLLLDQAFLAGLGNYLRVEILWQVGLTGNHKAKDLNAAQLDALAHALLDIPRLSYATRGQVDENKYHGALFRFKVFHRDGEPCERCGGIIEKTTLSSRPFYWCPGCQH.

Proline 2 (schiff-base intermediate with DNA) is an active-site residue. Glutamate 3 serves as the catalytic Proton donor. The Proton donor; for beta-elimination activity role is filled by lysine 53. DNA contacts are provided by glutamine 70, arginine 125, and asparagine 169. The segment at 229-263 (KVFHRDGEPCERCGGIIEKTTLSSRPFYWCPGCQH) adopts an FPG-type zinc-finger fold. Arginine 253 acts as the Proton donor; for delta-elimination activity in catalysis.

It belongs to the FPG family. Zn(2+) is required as a cofactor.

It catalyses the reaction 2'-deoxyribonucleotide-(2'-deoxyribose 5'-phosphate)-2'-deoxyribonucleotide-DNA = a 3'-end 2'-deoxyribonucleotide-(2,3-dehydro-2,3-deoxyribose 5'-phosphate)-DNA + a 5'-end 5'-phospho-2'-deoxyribonucleoside-DNA + H(+). Its function is as follows. Involved in base excision repair of DNA damaged by oxidation or by mutagenic agents. Acts as a DNA glycosylase that recognizes and removes damaged bases. Has a preference for oxidized pyrimidines, such as thymine glycol, 5,6-dihydrouracil and 5,6-dihydrothymine. Has AP (apurinic/apyrimidinic) lyase activity and introduces nicks in the DNA strand. Cleaves the DNA backbone by beta-delta elimination to generate a single-strand break at the site of the removed base with both 3'- and 5'-phosphates. This Escherichia coli O6:K15:H31 (strain 536 / UPEC) protein is Endonuclease 8.